The sequence spans 637 residues: Chaperone protein DnaK (637 aa).

T196 carries the phosphothreonine; by autocatalysis modification. Positions 598-637 are disordered; it reads AEAPGADAPEGQAPQDGGSKKGGEGAVENAEYEVIDGDGK. A compositionally biased stretch (acidic residues) spans 627–637; that stretch reads AEYEVIDGDGK.

Belongs to the heat shock protein 70 family.

Its function is as follows. Acts as a chaperone. In Chlorobium luteolum (strain DSM 273 / BCRC 81028 / 2530) (Pelodictyon luteolum), this protein is Chaperone protein DnaK.